The primary structure comprises 159 residues: MSNFTHINASGEANMVDVSAKQETVREARAEAFVHMAPETLELIVSGSHHKGDVFATARIAGIQAAKKTWDLIPLCHPLLLSKVEVQLEAIEAENMVRIESVCKLAGKTGVEMEALTAASVAALTIYDMCKAVQKDMVIGQVRLLEKTGGKSGHFKADA.

Residues 75–77 and 113–114 contribute to the substrate site; these read LCH and ME. D128 is a catalytic residue.

The protein belongs to the MoaC family. As to quaternary structure, homohexamer; trimer of dimers.

It catalyses the reaction (8S)-3',8-cyclo-7,8-dihydroguanosine 5'-triphosphate = cyclic pyranopterin phosphate + diphosphate. The protein operates within cofactor biosynthesis; molybdopterin biosynthesis. Catalyzes the conversion of (8S)-3',8-cyclo-7,8-dihydroguanosine 5'-triphosphate to cyclic pyranopterin monophosphate (cPMP). The chain is Cyclic pyranopterin monophosphate synthase from Aliivibrio fischeri (strain MJ11) (Vibrio fischeri).